A 609-amino-acid chain; its full sequence is Glutamine--fructose-6-phosphate aminotransferase [isomerizing] (609 aa).

The active-site Nucleophile; for GATase activity is C2. The Glutamine amidotransferase type-2 domain occupies 2–218; sequence CGIVGAIAQR…EGDIAEITRR (217 aa). 2 consecutive SIS domains span residues 286–426 and 458–599; these read ADEL…LKGL and LAED…VDQP. Catalysis depends on K604, which acts as the For Fru-6P isomerization activity.

As to quaternary structure, homodimer.

It is found in the cytoplasm. The catalysed reaction is D-fructose 6-phosphate + L-glutamine = D-glucosamine 6-phosphate + L-glutamate. In terms of biological role, catalyzes the first step in hexosamine metabolism, converting fructose-6P into glucosamine-6P using glutamine as a nitrogen source. In Salmonella paratyphi A (strain ATCC 9150 / SARB42), this protein is Glutamine--fructose-6-phosphate aminotransferase [isomerizing].